A 137-amino-acid chain; its full sequence is Acidic phospholipase A2 beta-bungarotoxin A chain (137 aa).

The first 9 residues, 1–9 (AVCVSLLGA), serve as a signal peptide directing secretion. The propeptide occupies 10–17 (ANIPPHPL). 6 disulfide bridges follow: C44-C136, C46-C62, C61-C117, C68-C110, C78-C103, and C96-C108. The Ca(2+) site is built by Y45, G47, and G49. H65 is an active-site residue. D66 provides a ligand contact to Ca(2+). The active site involves D111.

Belongs to the phospholipase A2 family. Group I subfamily. D49 sub-subfamily. Heterodimer; disulfide-linked. The A chain has phospholipase A2 activity and the B chain shows homology with the basic protease inhibitors. It depends on Ca(2+) as a cofactor. Expressed by the venom gland.

The protein localises to the secreted. It catalyses the reaction a 1,2-diacyl-sn-glycero-3-phosphocholine + H2O = a 1-acyl-sn-glycero-3-phosphocholine + a fatty acid + H(+). In terms of biological role, beta bungarotoxin is a presynaptic neurotoxin. The A chain has phospholipase activity. PLA2 catalyzes the calcium-dependent hydrolysis of the 2-acyl groups in 3-sn-phosphoglycerides. This Bungarus candidus (Malayan krait) protein is Acidic phospholipase A2 beta-bungarotoxin A chain.